Here is a 296-residue protein sequence, read N- to C-terminus: Probable endonuclease 4 (296 aa).

Positions 68, 109, 144, 178, 181, 213, 226, 228, and 258 each coordinate Zn(2+).

The protein belongs to the AP endonuclease 2 family. Zn(2+) serves as cofactor.

It catalyses the reaction Endonucleolytic cleavage to 5'-phosphooligonucleotide end-products.. In terms of biological role, endonuclease IV plays a role in DNA repair. It cleaves phosphodiester bonds at apurinic or apyrimidinic (AP) sites, generating a 3'-hydroxyl group and a 5'-terminal sugar phosphate. This chain is Probable endonuclease 4, found in Staphylococcus aureus (strain MRSA252).